The chain runs to 154 residues: MERKHMNVASFNLDHNAVKAPYVRLADKKIGSHGDVIYKYDIRVCQPNREQMLMPALHSLEHLLAELMRNHSDKILDISPMGCQTGFYISLLNEPDYQVMLHLLETTLNDILAAEAVPACCEEQCGFAANHSLSGAQEIARYLLAHRNKWEQVF.

Histidine 58, histidine 62, and cysteine 125 together coordinate Fe cation.

The protein belongs to the LuxS family. In terms of assembly, homodimer. Requires Fe cation as cofactor.

It carries out the reaction S-(5-deoxy-D-ribos-5-yl)-L-homocysteine = (S)-4,5-dihydroxypentane-2,3-dione + L-homocysteine. Functionally, involved in the synthesis of autoinducer 2 (AI-2) which is secreted by bacteria and is used to communicate both the cell density and the metabolic potential of the environment. The regulation of gene expression in response to changes in cell density is called quorum sensing. Catalyzes the transformation of S-ribosylhomocysteine (RHC) to homocysteine (HC) and 4,5-dihydroxy-2,3-pentadione (DPD). The sequence is that of S-ribosylhomocysteine lyase from Dichelobacter nodosus (strain VCS1703A).